The primary structure comprises 310 residues: Methionyl-tRNA formyltransferase (310 aa).

110 to 113 (SLLP) lines the (6S)-5,6,7,8-tetrahydrofolate pocket.

This sequence belongs to the Fmt family.

It carries out the reaction L-methionyl-tRNA(fMet) + (6R)-10-formyltetrahydrofolate = N-formyl-L-methionyl-tRNA(fMet) + (6S)-5,6,7,8-tetrahydrofolate + H(+). Its function is as follows. Attaches a formyl group to the free amino group of methionyl-tRNA(fMet). The formyl group appears to play a dual role in the initiator identity of N-formylmethionyl-tRNA by promoting its recognition by IF2 and preventing the misappropriation of this tRNA by the elongation apparatus. The sequence is that of Methionyl-tRNA formyltransferase from Clostridium tetani (strain Massachusetts / E88).